We begin with the raw amino-acid sequence, 944 residues long: Spindle pole body component 110 (944 aa).

Threonine 18 is subject to Phosphothreonine. Residues 23-110 (IKSKRNTTQT…RKRNLIDDLK (88 aa)) are disordered. Positions 28-46 (NTTQTQVVSPTKVPNANNG) are enriched in polar residues. Positions 54-59 (KKRQRR) match the Nuclear localization signal motif. At serine 60 the chain carries Phosphoserine; by MPS1. Phosphothreonine; by MPS1 is present on residues threonine 64 and threonine 68. A compositionally biased stretch (polar residues) spans 67-78 (STRLFSEASQFD). A Phosphoserine modification is found at serine 80. Basic and acidic residues predominate over residues 96-110 (NVDKSRKRNLIDDLK). Residues 119 to 799 (LKEQEVREHQ…ILNERRKDND (681 aa)) are a coiled coil. Serine 529 carries the post-translational modification Phosphoserine. 2 consecutive short sequence motifs (nuclear localization signal) follow at residues 726 to 731 (KEKYKR) and 742 to 747 (RLRREK). Residues 900–927 (SFKTVALLVLACVRMKRIAFYRRSDDNR) form a calmodulin-binding region.

It belongs to the SPC110 family. In terms of assembly, homodimer. Component of the SPC110 complex containing at least CMD1, SPC29 and SCP110. Interacts with SPC97 and SPC98.

Its subcellular location is the nucleus. The protein localises to the cytoplasm. The protein resides in the cytoskeleton. It localises to the microtubule organizing center. It is found in the spindle pole body. Functionally, component of the spindle pole body (SPB) required for the proper execution of spindle pole body (SPB) duplication. Potential role in cross-linking filaments or anchoring other molecules. It is essential for growth. The chain is Spindle pole body component 110 (SPC110) from Saccharomyces cerevisiae (strain YJM789) (Baker's yeast).